Here is a 753-residue protein sequence, read N- to C-terminus: Pumilio homolog 23 (753 aa).

Residues 1–84 (MVSVGSKSLP…SEFEHQNQFV (84 aa)) are disordered. Basic and acidic residues-rich tracts occupy residues 23 to 38 (MGER…ERNK), 47 to 57 (GNRGFDVDSSK), and 73 to 84 (KHSEFEHQNQFV). 8 Pumilio repeats span residues 123–158 (ETRG…SFIR), 159–198 (NSAS…SVIE), 206–244 (KVIV…ELYG), 284–325 (GLLS…EIIP), 345–380 (NVAK…EMFN), 381–418 (KVFK…IMWE), 526–563 (SMKA…RLII), and 564–599 (KLRG…AIAS). Positions 322–675 (EIIPLILRCN…DASEDAAQEI (354 aa)) constitute a PUM-HD domain. Composition is skewed to basic and acidic residues over residues 677-688 (VKNTRKEIDHHP), 699-712 (HAKD…GEKR), and 719-728 (KTSEATDKPK). The disordered stretch occupies residues 677-753 (VKNTRKEIDH…KNRHSNKMRI (77 aa)). Positions 744–753 (KNRHSNKMRI) are enriched in basic residues.

The protein resides in the nucleus. It is found in the nucleolus. In terms of biological role, sequence-specific RNA-binding protein that regulates translation and mRNA stability by binding the 3'-UTR of target mRNAs. This is Pumilio homolog 23 (APUM23) from Arabidopsis thaliana (Mouse-ear cress).